Here is a 328-residue protein sequence, read N- to C-terminus: Stress response kinase A (328 aa).

Asp201 serves as the catalytic Proton acceptor. Asn206 and Asp217 together coordinate Mg(2+). Residue Asp217 is part of the active site.

This sequence belongs to the SrkA/RdoA protein kinase family. Monomer. It depends on Mg(2+) as a cofactor.

Its subcellular location is the cytoplasm. The enzyme catalyses L-seryl-[protein] + ATP = O-phospho-L-seryl-[protein] + ADP + H(+). The catalysed reaction is L-threonyl-[protein] + ATP = O-phospho-L-threonyl-[protein] + ADP + H(+). A protein kinase that phosphorylates Ser and Thr residues. Probably acts to suppress the effects of stress linked to accumulation of reactive oxygen species. Probably involved in the extracytoplasmic stress response. Also has a role in LPS synthesis, through regulation of the galETK expression. In terms of biological role, a protein kinase that phosphorylates Ser and Thr residues. Probably acts to suppress the effects of stress linked to accumulation of reactive oxygen species. Probably involved in the extracytoplasmic stress response. The sequence is that of Stress response kinase A from Shigella flexneri.